Here is a 62-residue protein sequence, read N- to C-terminus: Conotoxin TsMLCL-02 (62 aa).

A signal peptide spans 1–19 (MLCLPVFIILLLLASPAAP). A propeptide spanning residues 20 to 54 (NPLERRIQSDLIRAALEDADMKTEKGILSSIMGTL) is cleaved from the precursor.

It belongs to the conotoxin T superfamily. Expressed by the venom duct.

Its subcellular location is the secreted. In Conus tessulatus (Tessellate cone), this protein is Conotoxin TsMLCL-02.